We begin with the raw amino-acid sequence, 95 residues long: Citrate lyase acyl carrier protein (95 aa).

An O-(phosphoribosyl dephospho-coenzyme A)serine modification is found at Ser-14.

This sequence belongs to the CitD family. Oligomer with a subunit composition of (alpha,beta,gamma)6.

It is found in the cytoplasm. Functionally, covalent carrier of the coenzyme of citrate lyase. The protein is Citrate lyase acyl carrier protein of Haemophilus influenzae (strain 86-028NP).